The primary structure comprises 296 residues: Lipoyl synthase (296 aa).

7 residues coordinate [4Fe-4S] cluster: Cys37, Cys42, Cys48, Cys63, Cys67, Cys70, and Ser276. Residues 49–265 (WSKKHTTVMI…ERVAKTKGFL (217 aa)) enclose the Radical SAM core domain.

This sequence belongs to the radical SAM superfamily. Lipoyl synthase family. [4Fe-4S] cluster serves as cofactor.

Its subcellular location is the cytoplasm. It carries out the reaction [[Fe-S] cluster scaffold protein carrying a second [4Fe-4S](2+) cluster] + N(6)-octanoyl-L-lysyl-[protein] + 2 oxidized [2Fe-2S]-[ferredoxin] + 2 S-adenosyl-L-methionine + 4 H(+) = [[Fe-S] cluster scaffold protein] + N(6)-[(R)-dihydrolipoyl]-L-lysyl-[protein] + 4 Fe(3+) + 2 hydrogen sulfide + 2 5'-deoxyadenosine + 2 L-methionine + 2 reduced [2Fe-2S]-[ferredoxin]. It participates in protein modification; protein lipoylation via endogenous pathway; protein N(6)-(lipoyl)lysine from octanoyl-[acyl-carrier-protein]: step 2/2. Its function is as follows. Catalyzes the radical-mediated insertion of two sulfur atoms into the C-6 and C-8 positions of the octanoyl moiety bound to the lipoyl domains of lipoate-dependent enzymes, thereby converting the octanoylated domains into lipoylated derivatives. The protein is Lipoyl synthase of Rickettsia peacockii (strain Rustic).